Reading from the N-terminus, the 301-residue chain is Rhodopsin (301 aa).

The Extracellular segment spans residues 1–18 (LHMIHLHWYQYPPMNPMM). The helical transmembrane segment at 19-43 (YPLLLIFMFITGIPCLAGNFVTIWV) threads the bilayer. Residues 44–55 (FMTTKSLRSPAN) are Cytoplasmic-facing. The helical transmembrane segment at 56-78 (LLVVNLAMSDFLMMFTMFPPMMI) threads the bilayer. The Extracellular portion of the chain corresponds to 79–92 (TCYYHTWTLGPTFC). The cysteines at positions 92 and 169 are disulfide-linked. Residues 93–115 (QVYAFLGNLFGCTSIWTMVFITF) traverse the membrane as a helical segment. Positions 116 to 118 (DRY) match the 'Ionic lock' involved in activated form stabilization motif. Residues 116 to 134 (DRYNVIVKGVAGEPLSNKK) are Cytoplasmic-facing. The helical transmembrane segment at 135–155 (AALWILSAWVLSFSWCSAPFF) threads the bilayer. Topologically, residues 156–182 (GWNRYVPEGNLTGCGTDYLSEDALSRS) are extracellular. The N-linked (GlcNAc...) asparagine glycan is linked to Asn165. The chain crosses the membrane as a helical span at residues 183–204 (YLYVYSVWVYFLPLLITIYCYV). The Cytoplasmic portion of the chain corresponds to 205 to 245 (FIIKAVAAHEKGMRDQAKKMGIKSLRNEEAQKTSAECRLAK). Residues 246–267 (IAMTTVALWFIAWTPYLLINWV) form a helical membrane-spanning segment. The Extracellular portion of the chain corresponds to 268–278 (GMFARSYLSPV). The chain crosses the membrane as a helical span at residues 279 to 300 (YTIWGYVFAKANAVYNPIVYAI). An N6-(retinylidene)lysine modification is found at Lys288.

The protein belongs to the G-protein coupled receptor 1 family. Opsin subfamily. As to quaternary structure, homodimer. Interacts with GNAQ. Contains one covalently linked retinal chromophore.

It localises to the cell projection. The protein localises to the rhabdomere membrane. Photoreceptor required for image-forming vision at low light intensity. Can use both retinal and 3-dehydroretinal as visual pigment. Light-induced isomerization of 11-cis to all-trans retinal triggers a conformational change that activates signaling via G-proteins. Signaling via GNAQ probably mediates the activation of phospholipase C. This chain is Rhodopsin (RHO), found in Cambarellus shufeldtii (Cajun dwarf crayfish).